We begin with the raw amino-acid sequence, 203 residues long: Cytochrome c biogenesis ATP-binding export protein CcmA (203 aa).

The ABC transporter domain maps to 2 to 203; the sequence is LEALDLAGVR…KTSQTVRMGA (202 aa). 34 to 41 provides a ligand contact to ATP; it reads GENGSGKT.

This sequence belongs to the ABC transporter superfamily. CcmA exporter (TC 3.A.1.107) family. As to quaternary structure, the complex is composed of two ATP-binding proteins (CcmA) and two transmembrane proteins (CcmB).

It localises to the cell inner membrane. It catalyses the reaction heme b(in) + ATP + H2O = heme b(out) + ADP + phosphate + H(+). In terms of biological role, part of the ABC transporter complex CcmAB involved in the biogenesis of c-type cytochromes; once thought to export heme, this seems not to be the case, but its exact role is uncertain. Responsible for energy coupling to the transport system. The polypeptide is Cytochrome c biogenesis ATP-binding export protein CcmA (Pseudomonas aeruginosa).